The sequence spans 227 residues: Endo-1,4-beta-xylanase 11A (227 aa).

An N-terminal signal peptide occupies residues 1-36 (MVSASSLLLAASAIAGVFSAPAAAPVSENLNVLQER). A GH11 domain is found at 37-227 (ALTSSATGTS…SSGSASITVS (191 aa)). The tract at residues 112-136 (VYGWTTSPLIEYYIVEDFGTYDPSS) is necrosis inducing domain. E122 acts as the Nucleophile in catalysis. The active-site Proton donor is the E214.

The protein belongs to the glycosyl hydrolase 11 (cellulase G) family.

The protein resides in the secreted. The catalysed reaction is Endohydrolysis of (1-&gt;4)-beta-D-xylosidic linkages in xylans.. It participates in glycan degradation; xylan degradation. Its activity is regulated as follows. Significantly inhibited by the wheat xylanase inhibiting protein I (XIP-I) and the proteinaceous endoxylanase Triticum aestivum xylanase inhibitors I (TAXI-I), whereas no inhibition is detected with TAXI-II. Endo-1,4-beta-xylanase involved in the hydrolysis of xylan, a major structural heterogeneous polysaccharide found in plant biomass representing the second most abundant polysaccharide in the biosphere, after cellulose. Required for plant infection and the appearance of secondary lesions. Is able to induce necrosis on leaves, seedling growth inhibition, induction of a ROS burst, electrolyte leakage, cytoplasm shrinkage, autofluorescence, cell death, and induction of defense genes, and this abilities are independent of the catalytic activity. Only exhibits elicitor activity in certain plants such as tomato, but not in N.benthamiana. The polypeptide is Endo-1,4-beta-xylanase 11A (Botryotinia fuckeliana (strain B05.10) (Noble rot fungus)).